Consider the following 299-residue polypeptide: MTFKSGFVAILGRPNVGKSTFLNHVMGQKIAIMSDKAQTTRNKIMGIYTTDKEQIVFIDTPGIHKPKTALGDFMVEAAYSTLREVDTVLFMVPADEPRGKGDDMIIERLKAAKVPVILVVNKIDKVHPDQLLAQIDDFRQQMDFKEIVPISALQGNNVSRLVDILSENLEEGFQYFPEDQITDHPERFLVSEMIREKVLMLTREEIPHSVAVVIDSMKRDEETDKVHIRATIMVERDSQKGIIIGKGGSMLKKIGSMARRDIELMLGDKVFLETWVKVKKNWRDKKLDLADFGYNKKEY.

Positions 4–171 constitute an Era-type G domain; that stretch reads KSGFVAILGR…VDILSENLEE (168 aa). The G1 stretch occupies residues 12–19; it reads GRPNVGKS. 12–19 contributes to the GTP binding site; the sequence is GRPNVGKS. Residues 38–42 form a G2 region; the sequence is QTTRN. Positions 59–62 are G3; sequence DTPG. Residues 59-63 and 121-124 each bind GTP; these read DTPGI and NKID. Residues 121–124 are G4; it reads NKID. Residues 150–152 are G5; the sequence is ISA. One can recognise a KH type-2 domain in the interval 202–280; that stretch reads TREEIPHSVA…FLETWVKVKK (79 aa).

This sequence belongs to the TRAFAC class TrmE-Era-EngA-EngB-Septin-like GTPase superfamily. Era GTPase family. As to quaternary structure, monomer.

Its subcellular location is the cytoplasm. The protein resides in the cell membrane. Its function is as follows. An essential GTPase that binds both GDP and GTP, with rapid nucleotide exchange. Plays a role in 16S rRNA processing and 30S ribosomal subunit biogenesis and possibly also in cell cycle regulation and energy metabolism. The chain is GTPase Era from Streptococcus gordonii (strain Challis / ATCC 35105 / BCRC 15272 / CH1 / DL1 / V288).